Consider the following 162-residue polypeptide: Superoxide dismutase [Cu-Zn] (162 aa).

A signal peptide spans 1–20 (MNKSGIILIGTILFSSMAIA). His-66, His-68, and His-83 together coordinate Cu cation. Residues Cys-73 and Cys-158 are joined by a disulfide bond. Zn(2+) is bound by residues His-83, His-92, His-100, and Asp-103. Position 137 (His-137) interacts with Cu cation.

The protein belongs to the Cu-Zn superoxide dismutase family. Homodimer. Cu cation serves as cofactor. Zn(2+) is required as a cofactor.

It localises to the periplasm. It catalyses the reaction 2 superoxide + 2 H(+) = H2O2 + O2. Functionally, destroys radicals which are normally produced within the cells and which are toxic to biological systems. The chain is Superoxide dismutase [Cu-Zn] (sodC) from Legionella pneumophila.